The primary structure comprises 322 residues: Undecaprenyl-phosphate 4-deoxy-4-formamido-L-arabinose transferase (322 aa).

The Cytoplasmic portion of the chain corresponds to 1-235; the sequence is MFEIHPVKKV…TCLTTTPLRM (235 aa). Residues 236–256 traverse the membrane as a helical segment; sequence LSLLGSIIAIGGFSIAVLLVI. At 257-269 the chain is on the periplasmic side; the sequence is LRLTFGPQWAAEG. Residues 270 to 290 form a helical membrane-spanning segment; the sequence is VFMLFAVLFTFIGAQFIGMGL. At 291 to 322 the chain is on the cytoplasmic side; that stretch reads LGEYIGRIYTDVRARPRYFVQQVIRPSSKENE.

It belongs to the glycosyltransferase 2 family.

The protein resides in the cell inner membrane. The enzyme catalyses UDP-4-deoxy-4-formamido-beta-L-arabinose + di-trans,octa-cis-undecaprenyl phosphate = 4-deoxy-4-formamido-alpha-L-arabinopyranosyl di-trans,octa-cis-undecaprenyl phosphate + UDP. It participates in glycolipid biosynthesis; 4-amino-4-deoxy-alpha-L-arabinose undecaprenyl phosphate biosynthesis; 4-amino-4-deoxy-alpha-L-arabinose undecaprenyl phosphate from UDP-4-deoxy-4-formamido-beta-L-arabinose and undecaprenyl phosphate: step 1/2. The protein operates within bacterial outer membrane biogenesis; lipopolysaccharide biosynthesis. Its function is as follows. Catalyzes the transfer of 4-deoxy-4-formamido-L-arabinose from UDP to undecaprenyl phosphate. The modified arabinose is attached to lipid A and is required for resistance to polymyxin and cationic antimicrobial peptides. The polypeptide is Undecaprenyl-phosphate 4-deoxy-4-formamido-L-arabinose transferase (Shigella flexneri).